The primary structure comprises 229 residues: Elongation factor 1-delta 1 (229 aa).

A disordered region spans residues 80–109 (ESTAVPSASTPDVADAKAPAADDDDDDDVD). Positions 100–109 (ADDDDDDDVD) are enriched in acidic residues.

The protein belongs to the EF-1-beta/EF-1-delta family. EF-1 is composed of 4 subunits: alpha, beta (1B-alpha=beta'), delta (1B-beta), and gamma (1B-gamma).

In terms of biological role, EF-1-beta and EF-1-beta' stimulate the exchange of GDP bound to EF-1-alpha to GTP. The polypeptide is Elongation factor 1-delta 1 (Oryza sativa subsp. japonica (Rice)).